The sequence spans 420 residues: Dihydrolipoyllysine-residue succinyltransferase component of 2-oxoglutarate dehydrogenase complex (420 aa).

The 76-residue stretch at 1 to 76 (MAEVKVPELA…EVGQAVAVVG (76 aa)) folds into the Lipoyl-binding domain. K42 is subject to N6-lipoyllysine. A disordered region spans residues 75–199 (VGEGQVNTSN…IREKMSRRKK (125 aa)). Positions 81 to 90 (NTSNDSSNES) are enriched in polar residues. Basic and acidic residues predominate over residues 91-102 (SQKDEAKEKETP). Residues 103–127 (KQSNPNSSESENTQDNSQQRINATP) are compositionally biased toward polar residues. The Peripheral subunit-binding (PSBD) domain maps to 124 to 160 (NATPSARRHARKNGVDLSEVSGKGNDVLRKDDVENSQ). The span at 149 to 158 (DVLRKDDVEN) shows a compositional bias: basic and acidic residues. Positions 159-174 (SQKSSSQTAKSESKSQ) are enriched in low complexity. Positions 175–186 (NSGSKQTNNNPS) are enriched in polar residues. Active-site residues include H391 and D395.

It belongs to the 2-oxoacid dehydrogenase family. Forms a 24-polypeptide structural core with octahedral symmetry. Part of the 2-oxoglutarate dehydrogenase (OGDH) complex composed of E1 (2-oxoglutarate dehydrogenase), E2 (dihydrolipoamide succinyltransferase) and E3 (dihydrolipoamide dehydrogenase); the complex contains multiple copies of the three enzymatic components (E1, E2 and E3). (R)-lipoate is required as a cofactor.

It catalyses the reaction N(6)-[(R)-dihydrolipoyl]-L-lysyl-[protein] + succinyl-CoA = N(6)-[(R)-S(8)-succinyldihydrolipoyl]-L-lysyl-[protein] + CoA. The protein operates within amino-acid degradation; L-lysine degradation via saccharopine pathway; glutaryl-CoA from L-lysine: step 6/6. Functionally, E2 component of the 2-oxoglutarate dehydrogenase (OGDH) complex which catalyzes the second step in the conversion of 2-oxoglutarate to succinyl-CoA and CO(2). The chain is Dihydrolipoyllysine-residue succinyltransferase component of 2-oxoglutarate dehydrogenase complex (odhB) from Staphylococcus epidermidis (strain ATCC 35984 / DSM 28319 / BCRC 17069 / CCUG 31568 / BM 3577 / RP62A).